Consider the following 658-residue polypeptide: UvrABC system protein B (658 aa).

Residues 25–182 (ESLNGGNSHQ…KGLVDIQYSR (158 aa)) enclose the Helicase ATP-binding domain. An ATP-binding site is contributed by 38–45 (GVTGSGKT). The Beta-hairpin signature appears at 91-114 (YYDYYQPEAYIPQTDTYIEKDASI). Residues 429–595 (QIDDLYSEIN…TVQKKVHDVI (167 aa)) enclose the Helicase C-terminal domain. A UVR domain is found at 622–657 (KELIAKLQEEMKQAAKELEFEKAAELRDLIMELKTA).

It belongs to the UvrB family. In terms of assembly, forms a heterotetramer with UvrA during the search for lesions. Interacts with UvrC in an incision complex.

It localises to the cytoplasm. Functionally, the UvrABC repair system catalyzes the recognition and processing of DNA lesions. A damage recognition complex composed of 2 UvrA and 2 UvrB subunits scans DNA for abnormalities. Upon binding of the UvrA(2)B(2) complex to a putative damaged site, the DNA wraps around one UvrB monomer. DNA wrap is dependent on ATP binding by UvrB and probably causes local melting of the DNA helix, facilitating insertion of UvrB beta-hairpin between the DNA strands. Then UvrB probes one DNA strand for the presence of a lesion. If a lesion is found the UvrA subunits dissociate and the UvrB-DNA preincision complex is formed. This complex is subsequently bound by UvrC and the second UvrB is released. If no lesion is found, the DNA wraps around the other UvrB subunit that will check the other stand for damage. This is UvrABC system protein B from Natranaerobius thermophilus (strain ATCC BAA-1301 / DSM 18059 / JW/NM-WN-LF).